A 628-amino-acid polypeptide reads, in one-letter code: Chaperone protein DnaK (628 aa).

Thr195 bears the Phosphothreonine; by autocatalysis mark. Residues 545 to 628 are disordered; it reads QLEENEGAAQ…VIDADFKAAE (84 aa). Residues 555–591 show a composition bias toward basic and acidic residues; it reads DAKDALKAAADEAEEAVRSEDDARIESAQKRLEEELR. Over residues 596 to 612 the composition is skewed to low complexity; it reads AQQAAGQGQPQGAQAQG. Over residues 614-628 the composition is skewed to basic and acidic residues; it reads KADDDVIDADFKAAE.

It belongs to the heat shock protein 70 family.

Acts as a chaperone. This Deinococcus deserti (strain DSM 17065 / CIP 109153 / LMG 22923 / VCD115) protein is Chaperone protein DnaK.